We begin with the raw amino-acid sequence, 356 residues long: Histidinol-phosphate aminotransferase 2 (356 aa).

N6-(pyridoxal phosphate)lysine is present on Lys213.

It belongs to the class-II pyridoxal-phosphate-dependent aminotransferase family. Histidinol-phosphate aminotransferase subfamily. As to quaternary structure, homodimer. Pyridoxal 5'-phosphate is required as a cofactor.

It catalyses the reaction L-histidinol phosphate + 2-oxoglutarate = 3-(imidazol-4-yl)-2-oxopropyl phosphate + L-glutamate. It functions in the pathway amino-acid biosynthesis; L-histidine biosynthesis; L-histidine from 5-phospho-alpha-D-ribose 1-diphosphate: step 7/9. This chain is Histidinol-phosphate aminotransferase 2, found in Burkholderia mallei (strain ATCC 23344).